The following is a 194-amino-acid chain: Peptidyl-tRNA hydrolase (194 aa).

Tyrosine 17 serves as a coordination point for tRNA. Histidine 22 serves as the catalytic Proton acceptor. Residues tyrosine 68, asparagine 70, and asparagine 116 each contribute to the tRNA site.

This sequence belongs to the PTH family. Monomer.

It localises to the cytoplasm. The catalysed reaction is an N-acyl-L-alpha-aminoacyl-tRNA + H2O = an N-acyl-L-amino acid + a tRNA + H(+). In terms of biological role, hydrolyzes ribosome-free peptidyl-tRNAs (with 1 or more amino acids incorporated), which drop off the ribosome during protein synthesis, or as a result of ribosome stalling. Its function is as follows. Catalyzes the release of premature peptidyl moieties from peptidyl-tRNA molecules trapped in stalled 50S ribosomal subunits, and thus maintains levels of free tRNAs and 50S ribosomes. The chain is Peptidyl-tRNA hydrolase from Pseudomonas putida (strain GB-1).